Consider the following 128-residue polypeptide: KHDC1-like protein (128 aa).

It belongs to the KHDC1 family.

This chain is KHDC1-like protein (KHDC1L), found in Homo sapiens (Human).